A 75-amino-acid polypeptide reads, in one-letter code: Defensin J1-1 (75 aa).

Positions 1-27 are cleaved as a signal peptide; sequence MAGFSKVVATIFLMMLLVFATDMMAEA. 4 cysteine pairs are disulfide-bonded: Cys-30–Cys-74, Cys-41–Cys-61, Cys-47–Cys-68, and Cys-51–Cys-70.

Belongs to the DEFL family. In terms of assembly, monomer. Expressed in orange and red ripe fruit and to a lesser extent in mature, green fruit. Present in trace in young, green fruit.

Its subcellular location is the secreted. Functionally, plant defense peptide with antifungal activity against F.oxysporum and B.cinerea. This chain is Defensin J1-1, found in Capsicum annuum (Capsicum pepper).